The primary structure comprises 145 residues: Large ribosomal subunit protein uL13 (145 aa).

It belongs to the universal ribosomal protein uL13 family. Part of the 50S ribosomal subunit.

Its function is as follows. This protein is one of the early assembly proteins of the 50S ribosomal subunit, although it is not seen to bind rRNA by itself. It is important during the early stages of 50S assembly. The sequence is that of Large ribosomal subunit protein uL13 from Bacillus licheniformis (strain ATCC 14580 / DSM 13 / JCM 2505 / CCUG 7422 / NBRC 12200 / NCIMB 9375 / NCTC 10341 / NRRL NRS-1264 / Gibson 46).